The sequence spans 274 residues: NH(3)-dependent NAD(+) synthetase (274 aa).

ATP is bound at residue G46–S53. D52 is a Mg(2+) binding site. Residue R140 coordinates deamido-NAD(+). An ATP-binding site is contributed by T160. E165 is a Mg(2+) binding site. Residues K173 and D180 each coordinate deamido-NAD(+). Positions 189 and 211 each coordinate ATP. Residue H260–K261 participates in deamido-NAD(+) binding.

It belongs to the NAD synthetase family. In terms of assembly, homodimer.

It catalyses the reaction deamido-NAD(+) + NH4(+) + ATP = AMP + diphosphate + NAD(+) + H(+). It functions in the pathway cofactor biosynthesis; NAD(+) biosynthesis; NAD(+) from deamido-NAD(+) (ammonia route): step 1/1. Catalyzes the ATP-dependent amidation of deamido-NAD to form NAD. Uses ammonia as a nitrogen source. In Pectobacterium carotovorum subsp. carotovorum (strain PC1), this protein is NH(3)-dependent NAD(+) synthetase.